We begin with the raw amino-acid sequence, 1040 residues long: Multidrug resistance protein MdtB (1040 aa).

The next 12 membrane-spanning stretches (helical) occupy residues 16–36 (FIMRPVATTLLMVAILLAGII), 347–367 (LMMAIALVVMIIYLFLRNIPA), 369–389 (IIPGVAVPLSLIGTFAVMVFL), 396–416 (LTLMALTIATGFVVDDAIVVI), 440–460 (IGFTIISLTFSLIAVLIPLLF), 472–492 (FAITLAVAILISAVVSLTLTP), 537–557 (WLTLSVALSTLLLSVLLWVFI), 863–883 (LGSTVWLIVAAVVAMYIVLGI), 888–908 (FIHPITILSTLPTAGVGALLA), 911–931 (IAGSELDVIAIIGIILLIGIV), 968–988 (ILMTTLAALLGALPLMLSTGV), and 998–1018 (IGMVGGLIVSQVLTLFTTPVI).

The protein belongs to the resistance-nodulation-cell division (RND) (TC 2.A.6) family. MdtB subfamily. As to quaternary structure, part of a tripartite efflux system composed of MdtA, MdtB and MdtC. MdtB forms a heteromultimer with MdtC.

The protein localises to the cell inner membrane. The polypeptide is Multidrug resistance protein MdtB (Shigella sonnei (strain Ss046)).